The primary structure comprises 133 residues: Putative esterase TV1331 (133 aa).

This sequence belongs to the thioesterase PaaI family.

In Thermoplasma volcanium (strain ATCC 51530 / DSM 4299 / JCM 9571 / NBRC 15438 / GSS1), this protein is Putative esterase TV1331.